The chain runs to 137 residues: Small heat shock protein IbpA (137 aa).

The sHSP domain occupies serine 28 to asparagine 137.

Belongs to the small heat shock protein (HSP20) family. Monomer. Forms homomultimers of about 100-150 subunits at optimal growth temperatures. Conformation changes to monomers at high temperatures or high ionic concentrations.

The protein resides in the cytoplasm. In terms of biological role, associates with aggregated proteins, together with IbpB, to stabilize and protect them from irreversible denaturation and extensive proteolysis during heat shock and oxidative stress. Aggregated proteins bound to the IbpAB complex are more efficiently refolded and reactivated by the ATP-dependent chaperone systems ClpB and DnaK/DnaJ/GrpE. Its activity is ATP-independent. The sequence is that of Small heat shock protein IbpA from Shigella sonnei (strain Ss046).